The chain runs to 223 residues: uncharacterized protein (223 aa).

This is an uncharacterized protein from Treponema pallidum (strain Nichols).